A 405-amino-acid polypeptide reads, in one-letter code: Enoyl-[acyl-carrier-protein] reductase [NADH] (405 aa).

NAD(+) is bound by residues 51–56, 77–78, 114–115, and 142–143; these read GASSGY, FE, DA, and LA. Y228 contributes to the substrate binding site. Y238 functions as the Proton donor in the catalytic mechanism. NAD(+) is bound by residues K247 and 276-278; that span reads VVT.

This sequence belongs to the TER reductase family. Monomer.

The catalysed reaction is a 2,3-saturated acyl-[ACP] + NAD(+) = a (2E)-enoyl-[ACP] + NADH + H(+). Its pathway is lipid metabolism; fatty acid biosynthesis. In terms of biological role, involved in the final reduction of the elongation cycle of fatty acid synthesis (FAS II). Catalyzes the reduction of a carbon-carbon double bond in an enoyl moiety that is covalently linked to an acyl carrier protein (ACP). The polypeptide is Enoyl-[acyl-carrier-protein] reductase [NADH] (Chromohalobacter salexigens (strain ATCC BAA-138 / DSM 3043 / CIP 106854 / NCIMB 13768 / 1H11)).